Reading from the N-terminus, the 122-residue chain is Guanine nucleotide exchange factor MSS4 homolog (122 aa).

The 112-residue stretch at 9-120 folds into the MSS4 domain; sequence EQITDGKNKS…YLALKRVVHK (112 aa). The Zn(2+) site is built by Cys22, Cys25, Cys92, and Cys95.

It belongs to the DSS4/MSS4 family. In terms of assembly, interacts with Rab8.

Its subcellular location is the basal cell membrane. Its function is as follows. Guanine-nucleotide-releasing protein that acts on members of the sec4/ypt1/rab subfamily such as Rab8. During egg development, essential for establishing and maintaining epithelial cell polarity by regulating the correct polarized deposition of basal membrane (BM) proteins such as trol/Pcan and vkg/Coll IV to the basal surface of follicular epithelial (FE) cells. Likely to function by restricting the activity of the vesicle transport regulator Rab8 to the basal membrane, and thus directs BM protein-containing vesicles to the basal side of the FE cells. This function is independent of the Crag/Rab10 regulation of polarized BM protein secretion in the FE. This chain is Guanine nucleotide exchange factor MSS4 homolog, found in Drosophila melanogaster (Fruit fly).